A 156-amino-acid chain; its full sequence is uncharacterized protein (156 aa).

Over residues methionine 1–alanine 12 the composition is skewed to pro residues. Disordered stretches follow at residues methionine 1–alanine 89 and proline 129–aspartate 156. Positions alanine 49–threonine 67 are enriched in basic and acidic residues.

This is an uncharacterized protein from Homo sapiens (Human).